Consider the following 293-residue polypeptide: Bifunctional protein FolD (293 aa).

NADP(+) contacts are provided by residues 164 to 166 (GRS), S193, and T234.

It belongs to the tetrahydrofolate dehydrogenase/cyclohydrolase family. Homodimer.

It catalyses the reaction (6R)-5,10-methylene-5,6,7,8-tetrahydrofolate + NADP(+) = (6R)-5,10-methenyltetrahydrofolate + NADPH. The enzyme catalyses (6R)-5,10-methenyltetrahydrofolate + H2O = (6R)-10-formyltetrahydrofolate + H(+). It functions in the pathway one-carbon metabolism; tetrahydrofolate interconversion. Its function is as follows. Catalyzes the oxidation of 5,10-methylenetetrahydrofolate to 5,10-methenyltetrahydrofolate and then the hydrolysis of 5,10-methenyltetrahydrofolate to 10-formyltetrahydrofolate. The protein is Bifunctional protein FolD of Bacteroides fragilis (strain ATCC 25285 / DSM 2151 / CCUG 4856 / JCM 11019 / LMG 10263 / NCTC 9343 / Onslow / VPI 2553 / EN-2).